A 326-amino-acid polypeptide reads, in one-letter code: High-affinity zinc uptake system protein ZnuA (326 aa).

The first 22 residues, 1–22 (MIRPSSLVLAAALGTAALPARA), serve as a signal peptide directing secretion. H59 is a Zn(2+) binding site. Over residues 117–155 (GGEHEHEHEHEHEHEHEHEHDGHGHAEEQAHHDHDHSGT) the composition is skewed to basic and acidic residues. Positions 117–161 (GGEHEHEHEHEHEHEHEHEHDGHGHAEEQAHHDHDHSGTDPHAWL) are disordered. Residues H158, H222, and D295 each coordinate Zn(2+). A disulfide bond links C267 and C322.

The protein belongs to the bacterial solute-binding protein 9 family. In terms of assembly, monomer.

The protein localises to the periplasm. Its function is as follows. Part of the ATP-binding cassette (ABC) transport system ZnuABC involved in zinc import. Binds zinc with high affinity and specificity and delivers it to the membrane permease for translocation into the cytoplasm. In Paracoccus denitrificans (strain Pd 1222), this protein is High-affinity zinc uptake system protein ZnuA.